The following is a 98-amino-acid chain: Feather keratin 3 (98 aa).

It belongs to the avian keratin family. In terms of assembly, the avian keratins (F-ker, S-ker, C-ker and B-ker) are a complex mixture of very similar polypeptides.

This chain is Feather keratin 3, found in Gallus gallus (Chicken).